Consider the following 132-residue polypeptide: MTLAQVEYRGTGRRKNSVARVRLVPGEGNITVNNRDVREYLPFESLILDLNQPFDVTETKGNYDVLVNVHGGGFTGQAQAIRHGIARALLEADPEYRGSLKRAGLLTRDPRMKERKKPGLKAARRSPQFSKR.

The interval 101 to 132 is disordered; it reads KRAGLLTRDPRMKERKKPGLKAARRSPQFSKR. Residues 113 to 132 are compositionally biased toward basic residues; the sequence is KERKKPGLKAARRSPQFSKR.

The protein belongs to the universal ribosomal protein uS9 family.

The sequence is that of Small ribosomal subunit protein uS9 from Staphylococcus aureus (strain USA300).